The following is a 68-amino-acid chain: Putative membrane protein insertion efficiency factor (68 aa).

It belongs to the UPF0161 family.

The protein localises to the cell inner membrane. Functionally, could be involved in insertion of integral membrane proteins into the membrane. The polypeptide is Putative membrane protein insertion efficiency factor (Persephonella marina (strain DSM 14350 / EX-H1)).